Consider the following 356-residue polypeptide: Protein translocase subunit SecY (356 aa).

A run of 8 helical transmembrane segments spans residues 24-44 (LFVI…IPGI), 77-97 (IFAL…LLTV), 125-145 (LVLA…MPGM), 154-174 (FAFY…LMWL), 183-203 (IGNG…PPAV), 217-237 (FLLL…VVFI), 274-294 (VIPA…ASWF), and 317-337 (YVLL…ALVF).

This sequence belongs to the SecY/SEC61-alpha family. Component of the Sec protein translocase complex. Heterotrimer consisting of SecY, SecE and SecG subunits. The heterotrimers can form oligomers, although 1 heterotrimer is thought to be able to translocate proteins. Interacts with the ribosome. Interacts with SecDF, and other proteins may be involved. Interacts with SecA.

It localises to the cell membrane. The central subunit of the protein translocation channel SecYEG. Consists of two halves formed by TMs 1-5 and 6-10. These two domains form a lateral gate at the front which open onto the bilayer between TMs 2 and 7, and are clamped together by SecE at the back. The channel is closed by both a pore ring composed of hydrophobic SecY resides and a short helix (helix 2A) on the extracellular side of the membrane which forms a plug. The plug probably moves laterally to allow the channel to open. The ring and the pore may move independently. This chain is Protein translocase subunit SecY, found in Buchnera aphidicola subsp. Acyrthosiphon kondoi (Acyrthosiphon kondoi symbiotic bacterium).